The sequence spans 522 residues: Maturase K (522 aa).

This sequence belongs to the intron maturase 2 family. MatK subfamily.

The protein resides in the plastid. It localises to the chloroplast. Usually encoded in the trnK tRNA gene intron. Probably assists in splicing its own and other chloroplast group II introns. The chain is Maturase K from Sapindus saponaria (Soapberry).